Here is a 265-residue protein sequence, read N- to C-terminus: Tryptophan synthase alpha chain (265 aa).

Catalysis depends on proton acceptor residues Glu-49 and Asp-60.

This sequence belongs to the TrpA family. In terms of assembly, tetramer of two alpha and two beta chains.

The catalysed reaction is (1S,2R)-1-C-(indol-3-yl)glycerol 3-phosphate + L-serine = D-glyceraldehyde 3-phosphate + L-tryptophan + H2O. It participates in amino-acid biosynthesis; L-tryptophan biosynthesis; L-tryptophan from chorismate: step 5/5. In terms of biological role, the alpha subunit is responsible for the aldol cleavage of indoleglycerol phosphate to indole and glyceraldehyde 3-phosphate. The polypeptide is Tryptophan synthase alpha chain (Desulfosudis oleivorans (strain DSM 6200 / JCM 39069 / Hxd3) (Desulfococcus oleovorans)).